Here is a 183-residue protein sequence, read N- to C-terminus: Type II secretion system protein H (183 aa).

The propeptide at 1 to 5 is leader sequence; it reads MRQRG. F6 is modified (N-methylphenylalanine). The chain crosses the membrane as a helical span at residues 6 to 26; it reads FTVLEMMLVVLLMGSAASLVI.

As to quaternary structure, type II secretion is composed of four main components: the outer membrane complex, the inner membrane complex, the cytoplasmic secretion ATPase and the periplasm-spanning pseudopilus. Interacts with core component PulG. Interacts with PulM. In terms of processing, cleaved by prepilin peptidase. Methylated by prepilin peptidase at the amino group of the N-terminal phenylalanine once the leader sequence is cleaved by prepilin peptidase.

The protein resides in the cell inner membrane. Functionally, component of the type II secretion system required for the energy-dependent secretion of extracellular factors such as proteases and toxins from the periplasm. Part of the pseudopilus tip complex that is critical for the recognition and binding of secretion substrates. In Klebsiella michiganensis (strain ATCC 8724 / DSM 4798 / JCM 20051 / NBRC 3318 / NRRL B-199 / KCTC 1686 / BUCSAV 143 / CCM 1901), this protein is Type II secretion system protein H (pulH).